Consider the following 396-residue polypeptide: Ribosomal RNA large subunit methyltransferase I (396 aa).

Positions 2–81 constitute a PUA domain; the sequence is TVSIYLAKGR…EAIDKDFFVR (80 aa).

It belongs to the methyltransferase superfamily. RlmI family.

It localises to the cytoplasm. It carries out the reaction cytidine(1962) in 23S rRNA + S-adenosyl-L-methionine = 5-methylcytidine(1962) in 23S rRNA + S-adenosyl-L-homocysteine + H(+). Functionally, specifically methylates the cytosine at position 1962 (m5C1962) of 23S rRNA. In Aliivibrio fischeri (strain MJ11) (Vibrio fischeri), this protein is Ribosomal RNA large subunit methyltransferase I.